Consider the following 155-residue polypeptide: MRVGIGYDVHKLVENRKLILGGVEIQYSKGLLGHSDADVLVHAIIDSILGAAGLGDIGKLFPDSDNKYKGISSLKLLKEVNALIKDKGYKIGNIDSTIIAQKPKISPYIEDIKKSLCNVLDIDLGSINIKATTEEGLGFTGRGEGISSQSICLLI.

A divalent metal cation-binding residues include D8 and H10. 4-CDP-2-C-methyl-D-erythritol 2-phosphate contacts are provided by residues 8–10 (DVH) and 34–35 (HS). H42 is a binding site for a divalent metal cation. 4-CDP-2-C-methyl-D-erythritol 2-phosphate-binding positions include 56–58 (DIG), 61–65 (FPDSD), 132–135 (TTEE), F139, and R142.

Belongs to the IspF family. As to quaternary structure, homotrimer. The cofactor is a divalent metal cation.

It catalyses the reaction 4-CDP-2-C-methyl-D-erythritol 2-phosphate = 2-C-methyl-D-erythritol 2,4-cyclic diphosphate + CMP. It participates in isoprenoid biosynthesis; isopentenyl diphosphate biosynthesis via DXP pathway; isopentenyl diphosphate from 1-deoxy-D-xylulose 5-phosphate: step 4/6. Its function is as follows. Involved in the biosynthesis of isopentenyl diphosphate (IPP) and dimethylallyl diphosphate (DMAPP), two major building blocks of isoprenoid compounds. Catalyzes the conversion of 4-diphosphocytidyl-2-C-methyl-D-erythritol 2-phosphate (CDP-ME2P) to 2-C-methyl-D-erythritol 2,4-cyclodiphosphate (ME-CPP) with a corresponding release of cytidine 5-monophosphate (CMP). The polypeptide is 2-C-methyl-D-erythritol 2,4-cyclodiphosphate synthase (Clostridium acetobutylicum (strain ATCC 824 / DSM 792 / JCM 1419 / IAM 19013 / LMG 5710 / NBRC 13948 / NRRL B-527 / VKM B-1787 / 2291 / W)).